The primary structure comprises 598 residues: Elongation factor 4 (598 aa).

Residues Gln3–Glu185 form the tr-type G domain. GTP-binding positions include Asp15–Thr20 and Asn132–Asp135.

The protein belongs to the TRAFAC class translation factor GTPase superfamily. Classic translation factor GTPase family. LepA subfamily.

Its subcellular location is the cell inner membrane. It carries out the reaction GTP + H2O = GDP + phosphate + H(+). Functionally, required for accurate and efficient protein synthesis under certain stress conditions. May act as a fidelity factor of the translation reaction, by catalyzing a one-codon backward translocation of tRNAs on improperly translocated ribosomes. Back-translocation proceeds from a post-translocation (POST) complex to a pre-translocation (PRE) complex, thus giving elongation factor G a second chance to translocate the tRNAs correctly. Binds to ribosomes in a GTP-dependent manner. The chain is Elongation factor 4 from Nitrosomonas europaea (strain ATCC 19718 / CIP 103999 / KCTC 2705 / NBRC 14298).